Consider the following 617-residue polypeptide: V-type proton ATPase catalytic subunit A (617 aa).

257 to 264 (GAFGCGKT) is an ATP binding site.

The protein belongs to the ATPase alpha/beta chains family. In terms of assembly, V-ATPase is a heteromultimeric enzyme composed of a peripheral catalytic V1 complex (components A to H) attached to an integral membrane V0 proton pore complex (components: a, c, c', c'', d, e, f and VOA1).

The protein resides in the vacuole membrane. It carries out the reaction ATP + H2O + 4 H(+)(in) = ADP + phosphate + 5 H(+)(out). In terms of biological role, catalytic subunit of the V1 complex of vacuolar(H+)-ATPase (V-ATPase), a multisubunit enzyme composed of a peripheral complex (V1) that hydrolyzes ATP and a membrane integral complex (V0) that translocates protons. V-ATPase is responsible for acidifying and maintaining the pH of intracellular compartments. In Eremothecium gossypii (strain ATCC 10895 / CBS 109.51 / FGSC 9923 / NRRL Y-1056) (Yeast), this protein is V-type proton ATPase catalytic subunit A (VMA1).